Reading from the N-terminus, the 152-residue chain is Transcriptional regulator MraZ (152 aa).

SpoVT-AbrB domains are found at residues 5–52 and 81–124; these read ATLV…PLPE and ASEC…DETT.

This sequence belongs to the MraZ family. In terms of assembly, forms oligomers.

It is found in the cytoplasm. Its subcellular location is the nucleoid. Its function is as follows. Negatively regulates its own expression and that of the subsequent genes in the proximal part of the division and cell wall (dcw) gene cluster. Acts by binding directly to DNA. May also regulate the expression of genes outside the dcw cluster. In Shigella dysenteriae serotype 1 (strain Sd197), this protein is Transcriptional regulator MraZ.